A 286-amino-acid polypeptide reads, in one-letter code: Transcription factor MafA (286 aa).

A phosphoserine mark is found at Ser-14 and Ser-49. Positions 51 to 85 (SSTPLSTPCSSVPSSPSFCAPSPGGQPSAGPTAAP) are enriched in low complexity. Residues 51 to 87 (SSTPLSTPCSSVPSSPSFCAPSPGGQPSAGPTAAPLG) form a disordered region. Phosphothreonine is present on residues Thr-53 and Thr-57. Phosphoserine is present on residues Ser-61 and Ser-65. Thr-113 carries the phosphothreonine modification. The tract at residues 126-167 (HHHHHHHQSYESFRPQPFGGEELPPAAHHHNAHHHHHHHHLR) is disordered. Residues 152-166 (AHHHNAHHHHHHHHL) are compositionally biased toward basic residues. The interval 199-224 (RLKQNRRTLKNRGYAQSCRYKRVQQR) is basic motif. The 64-residue stretch at 199–262 (RLKQNRRTLK…DLYKEKYEKL (64 aa)) folds into the bZIP domain. A leucine-zipper region spans residues 227 to 248 (LENEKCQLQSQVEQLKQEVSRL). The segment at 265–286 (RGFPREPSPPAAPKTTAADFFM) is disordered. The residue at position 272 (Ser-272) is a Phosphoserine. A compositionally biased stretch (low complexity) spans 277 to 286 (PKTTAADFFM).

Belongs to the bZIP family. Maf subfamily. Forms homodimers or heterodimers. May interact (via leucine-zipper domain) with MAFB. May interact with FOS and JUN. Interacts with PCAF; this interaction impairs MAFA ubiquitination.

It localises to the nucleus. Its function is as follows. Transcription factor involved in transcription regulation during lens development, including that of crystallin and filensin/BFSP1 genes. Binds to CRE-type MARE 5'-TGCTGACGTCAGCA-3' and TRE-type MARE 5'-TGCTGACTCAGCA-3' DNA sequences. The chain is Transcription factor MafA (MAFA) from Gallus gallus (Chicken).